The chain runs to 256 residues: Adenylate kinase (256 aa).

Position 49–54 (49–54 (GAGKGT)) interacts with ATP. The NMP stretch occupies residues 69-98 (ATGDMLREQVQQKTPLGIEAKKIMDAGGLV). AMP contacts are provided by residues threonine 70, arginine 75, 96–98 (GLV), 125–128 (GFPR), and glutamine 132. Residues 166 to 203 (GRLVHPASGRSYHKEFNPPKKRNVDDVTGEPLIQRSDD) are LID. ATP contacts are provided by residues arginine 167 and 176–177 (SY). AMP is bound by residues arginine 200 and arginine 211. Glutamine 239 serves as a coordination point for ATP.

It belongs to the adenylate kinase family. AK2 subfamily. In terms of assembly, monomer.

Its subcellular location is the cytoplasm. The protein resides in the cytosol. It is found in the mitochondrion intermembrane space. The enzyme catalyses AMP + ATP = 2 ADP. Its function is as follows. Catalyzes the reversible transfer of the terminal phosphate group between ATP and AMP. Plays an important role in cellular energy homeostasis and in adenine nucleotide metabolism. Adenylate kinase activity is critical for regulation of the phosphate utilization and the AMP de novo biosynthesis pathways. This chain is Adenylate kinase, found in Laccaria bicolor (strain S238N-H82 / ATCC MYA-4686) (Bicoloured deceiver).